A 358-amino-acid polypeptide reads, in one-letter code: MRVDDDRFPWDQDSILSRDLLSASSLQLCYENLNRSCVRSPYSPGPRLILYAVFGFGAVLAVCGNLMVMTSILHFRQLHSPANFLVASLACADFLVGLTVMPFSMVRSVEGCWYFGDTYCKLHTCFDVSFCYCSLFHLCFISVDRYIAVSDPLIYPTRFTASVSGKCITFSWLLSIIYGFPLIYTGASEAGLEDLVSALTCVGGCQIPMNQKFVLINFLLFLVPTLVMMTVYSKIFLIARQQAQNIEKMRKQTARASESYKDRVCKRERKAAKTLGIAVAAFLLSWLPYFIDSIIDAFLGFITPTYVYEILIWIVYYNSSMNPLIYAFFYPWFRKATKLIVTGKILRENSSTINLFPE.

The Extracellular segment spans residues 1 to 47 (MRVDDDRFPWDQDSILSRDLLSASSLQLCYENLNRSCVRSPYSPGPR). N-linked (GlcNAc...) asparagine glycosylation is present at asparagine 34. 2 disulfide bridges follow: cysteine 37–cysteine 201 and cysteine 120–cysteine 205. Residues 48-68 (LILYAVFGFGAVLAVCGNLMV) traverse the membrane as a helical segment. Residues 69 to 83 (MTSILHFRQLHSPAN) are Cytoplasmic-facing. Residues 84 to 104 (FLVASLACADFLVGLTVMPFS) traverse the membrane as a helical segment. Over 105–122 (MVRSVEGCWYFGDTYCKL) the chain is Extracellular. A helical membrane pass occupies residues 123-143 (HTCFDVSFCYCSLFHLCFISV). Residues 144 to 166 (DRYIAVSDPLIYPTRFTASVSGK) lie on the Cytoplasmic side of the membrane. Residues 167 to 187 (CITFSWLLSIIYGFPLIYTGA) form a helical membrane-spanning segment. Topologically, residues 188–212 (SEAGLEDLVSALTCVGGCQIPMNQK) are extracellular. A helical membrane pass occupies residues 213 to 233 (FVLINFLLFLVPTLVMMTVYS). The Cytoplasmic segment spans residues 234–274 (KIFLIARQQAQNIEKMRKQTARASESYKDRVCKRERKAAKT). The helical transmembrane segment at 275-295 (LGIAVAAFLLSWLPYFIDSII) threads the bilayer. Over 296 to 309 (DAFLGFITPTYVYE) the chain is Extracellular. Residues 310–333 (ILIWIVYYNSSMNPLIYAFFYPWF) traverse the membrane as a helical segment. The Cytoplasmic portion of the chain corresponds to 334–358 (RKATKLIVTGKILRENSSTINLFPE).

This sequence belongs to the G-protein coupled receptor 1 family.

The protein localises to the cell membrane. Olfactory receptor specific for N,N-dimethylalkylamines trace amines, such as N,N-dimethylcyclohexylamine. Trace amine compounds are enriched in animal body fluids and act on trace amine-associated receptors (TAARs) to elicit both intraspecific and interspecific innate behaviors. Ligand-binding causes a conformation change that triggers signaling via G(s)-class of G alpha proteins (GNAL or GNAS). The protein is Trace amine-associated receptor 7d of Rattus norvegicus (Rat).